The primary structure comprises 62 residues: Weak neurotoxin 5 (62 aa).

Cystine bridges form between Cys-3/Cys-24, Cys-6/Cys-11, Cys-17/Cys-40, Cys-44/Cys-54, and Cys-55/Cys-60.

Belongs to the three-finger toxin family. Ancestral subfamily. Orphan group II sub-subfamily. Expressed by the venom gland.

Its subcellular location is the secreted. Functionally, binds with low affinity to muscular (alpha-1-beta-1-delta-epsilon/CHRNA1-CHRNB1-CHRND-CHRNE) and very low affinity to neuronal (alpha-7/CHRNA7) nicotinic acetylcholine receptor (nAChR). This Naja naja (Indian cobra) protein is Weak neurotoxin 5.